The following is a 1017-amino-acid chain: Nonsense-mediated mRNA decay factor SMG5 (1017 aa).

The residue at position 2 (Ser-2) is an N-acetylserine. Ser-2 and Ser-423 each carry phosphoserine. Disordered stretches follow at residues 406–562 (GENP…PSEA) and 597–640 (TEPN…CRNE). Basic residues predominate over residues 448-467 (KSRKHSRLSCLRRRRRHHPP). Residues 486 to 496 (DSAQASDGSDS) are compositionally biased toward low complexity. The segment covering 620-629 (ASEDGSESEG) has biased composition (acidic residues). Residues 798 to 842 (AQSEQESLLQQAQAQFRMAEEEARRNRLMRDMAQLRLQLEVSQLE) are a coiled coil. Residues 873 to 996 (RQLATSGRFI…GPMQAALQAA (124 aa)) form the PINc domain.

As to quaternary structure, interacts with TERT, PPP2CA and SMG1. Part of a complex that contains SMG1, SMG5, SMG7, PPP2CA, a short isoform of UPF3A (isoform UPF3AS, but not isoform UPF3AL) and phosphorylated UPF1. Not detected in complexes that contain unphosphorylated UPF1.

The protein resides in the cytoplasm. It is found in the nucleus. In terms of biological role, plays a role in nonsense-mediated mRNA decay. Does not have RNase activity by itself. Promotes dephosphorylation of UPF1. Together with SMG7 is thought to provide a link to the mRNA degradation machinery involving exonucleolytic pathways, and to serve as an adapter for UPF1 to protein phosphatase 2A (PP2A), thereby triggering UPF1 dephosphorylation. Necessary for TERT activity. The protein is Nonsense-mediated mRNA decay factor SMG5 of Mus musculus (Mouse).